A 95-amino-acid polypeptide reads, in one-letter code: Cell division topological specificity factor (95 aa).

This sequence belongs to the MinE family.

Functionally, prevents the cell division inhibition by proteins MinC and MinD at internal division sites while permitting inhibition at polar sites. This ensures cell division at the proper site by restricting the formation of a division septum at the midpoint of the long axis of the cell. The polypeptide is Cell division topological specificity factor (Microcystis aeruginosa (strain NIES-843 / IAM M-2473)).